We begin with the raw amino-acid sequence, 231 residues long: Probable pseudouridine-5'-phosphatase (231 aa).

Residue Asp15 is the Nucleophile of the active site. Mg(2+) is bound by residues Asp15 and Asp17. Asp17 serves as the catalytic Proton donor.

This sequence belongs to the HAD-like hydrolase superfamily. CbbY/CbbZ/Gph/YieH family. Mg(2+) serves as cofactor.

It catalyses the reaction psi-UMP + H2O = pseudouridine + phosphate. Its function is as follows. Dephosphorylates pseudouridine 5'-phosphate, a potential intermediate in rRNA degradation. The chain is Probable pseudouridine-5'-phosphatase (Gs1l) from Drosophila melanogaster (Fruit fly).